Consider the following 623-residue polypeptide: Kelch repeat and BTB domain-containing protein 11 (623 aa).

The segment at 1-129 (MEHAVAPCVL…PEEPGEPAPV (129 aa)) is disordered. The span at 12-31 (PGTEPGAAGESESEGAASPA) shows a compositional bias: low complexity. Over residues 42–55 (CFSSGEESPPQSLA) the composition is skewed to polar residues. 4 positions are modified to phosphoserine: Ser64, Ser67, Ser87, and Ser107. Positions 79–91 (EAGSAGAASPEEL) are enriched in low complexity. Positions 140–196 (PDLVLEVSGRRLRAHKAVLAARSDYFRARASRDVLRVQGVSLTALRLLLADAYSGRM) constitute a BTB domain. Kelch repeat units lie at residues 311–359 (RPQS…VLYN), 360–412 (YLFV…ALDG), 413–455 (HLYA…ATTC), and 458–500 (EIYV…ALDG).

This is Kelch repeat and BTB domain-containing protein 11 (KBTBD11) from Homo sapiens (Human).